The following is a 326-amino-acid chain: Probable cell division protein WhiA (326 aa).

The H-T-H motif DNA-binding region spans 275-308 (SLEELGQLAEPPMTKDAVAGRIRRLLAMADKRAR).

The protein belongs to the WhiA family.

Involved in cell division and chromosome segregation. In Saccharopolyspora erythraea (strain ATCC 11635 / DSM 40517 / JCM 4748 / NBRC 13426 / NCIMB 8594 / NRRL 2338), this protein is Probable cell division protein WhiA.